The sequence spans 104 residues: Phosphoribosyl-ATP pyrophosphatase (104 aa).

It belongs to the PRA-PH family.

Its subcellular location is the cytoplasm. The enzyme catalyses 1-(5-phospho-beta-D-ribosyl)-ATP + H2O = 1-(5-phospho-beta-D-ribosyl)-5'-AMP + diphosphate + H(+). It participates in amino-acid biosynthesis; L-histidine biosynthesis; L-histidine from 5-phospho-alpha-D-ribose 1-diphosphate: step 2/9. In Methanocorpusculum labreanum (strain ATCC 43576 / DSM 4855 / Z), this protein is Phosphoribosyl-ATP pyrophosphatase.